The sequence spans 96 residues: Large ribosomal subunit protein bL27 (96 aa).

Positions 1 to 9 (MLRLDLQFF) are excised as a propeptide. Residues 14–36 (GVGSTKNGRDSQSKRLGAKRADG) form a disordered region.

It belongs to the bacterial ribosomal protein bL27 family. In terms of processing, the N-terminus is cleaved by ribosomal processing cysteine protease Prp.

This chain is Large ribosomal subunit protein bL27, found in Bacillus anthracis (strain A0248).